Consider the following 150-residue polypeptide: Large ribosomal subunit protein bL9 (150 aa).

This sequence belongs to the bacterial ribosomal protein bL9 family.

Functionally, binds to the 23S rRNA. In Neisseria meningitidis serogroup A / serotype 4A (strain DSM 15465 / Z2491), this protein is Large ribosomal subunit protein bL9.